The sequence spans 60 residues: Metallothionein B (60 aa).

A beta region spans residues 1-28 (MDPCDCSKSGTCNCGGSCTCTNCSCTTC). A divalent metal cation contacts are provided by C4, C6, C12, C14, C18, C20, C23, C25, C28, C32, C33, C35, C36, C40, C43, C47, C49, C54, C58, and C59. An alpha region spans residues 29–60 (KKSCCPCCPSGCTKCASGCVCKGKTCDTSCCQ).

It belongs to the metallothionein superfamily. Type 1 family.

Functionally, metallothioneins have a high content of cysteine residues that bind various heavy metals. The sequence is that of Metallothionein B (mtb) from Dicentrarchus labrax (European seabass).